Here is a 310-residue protein sequence, read N- to C-terminus: N-acetyl-gamma-glutamyl-phosphate reductase (310 aa).

Cysteine 117 is an active-site residue.

It belongs to the NAGSA dehydrogenase family. Type 2 subfamily.

It is found in the cytoplasm. The catalysed reaction is N-acetyl-L-glutamate 5-semialdehyde + phosphate + NADP(+) = N-acetyl-L-glutamyl 5-phosphate + NADPH + H(+). It participates in amino-acid biosynthesis; L-arginine biosynthesis; N(2)-acetyl-L-ornithine from L-glutamate: step 3/4. In terms of biological role, catalyzes the NADPH-dependent reduction of N-acetyl-5-glutamyl phosphate to yield N-acetyl-L-glutamate 5-semialdehyde. In Brucella melitensis biotype 1 (strain ATCC 23456 / CCUG 17765 / NCTC 10094 / 16M), this protein is N-acetyl-gamma-glutamyl-phosphate reductase.